A 283-amino-acid polypeptide reads, in one-letter code: uncharacterized protein (283 aa).

Asp-121 is a catalytic residue.

The protein belongs to the pseudouridine synthase RluA family.

It carries out the reaction a uridine in RNA = a pseudouridine in RNA. This is an uncharacterized protein from Bacillus subtilis (strain 168).